The sequence spans 2564 residues: Highly reducing polyketide synthase 40 (2564 aa).

The Ketosynthase family 3 (KS3) domain maps to 8–432; that stretch reads PEPIAIIGMS…GTNAHVIVDR (425 aa). Catalysis depends on for beta-ketoacyl synthase activity residues Cys-181, His-317, and His-358. The interval 435-482 is disordered; the sequence is EHNHSNGTNGTNGTHHHNGTNGSNGNGTNGTNGTNGTDGFHDTESISD. Positions 439–455 are enriched in low complexity; sequence SNGTNGTNGTHHHNGTN. Positions 473 to 482 are enriched in basic and acidic residues; the sequence is GFHDTESISD. The tract at residues 580–914 is malonyl-CoA:ACP transacylase (MAT) domain; it reads YVFGGQGAQY…SAAENMLRTL (335 aa). The interval 973 to 1113 is N-terminal hotdog fold; it reads HELLGNLSAD…GRIRAVVDQG (141 aa). A dehydratase (DH) domain region spans residues 973-1280; that stretch reads HELLGNLSAD…GLRTAQLPSD (308 aa). A PKS/mFAS DH domain is found at 973-1283; the sequence is HELLGNLSAD…TAQLPSDVVN (311 aa). His-1005 serves as the catalytic Proton acceptor; for dehydratase activity. A C-terminal hotdog fold region spans residues 1130-1283; sequence AASVPHHITS…TAQLPSDVVN (154 aa). Catalysis depends on Asp-1199, which acts as the Proton donor; for dehydratase activity. The segment at 1451–1556 is methyltransferase (CMet) domain; that stretch reads LEVGGGTASA…RQLLRPGGTL (106 aa). Positions 1854–2167 are enoyl reductase (ER) domain; sequence GLLETFRWVD…AGKHMGKVIL (314 aa). The tract at residues 2191-2370 is ketoreductase (KR) domain; it reads ATYLLVGGFG…SFAIDVGVVS (180 aa). The Carrier domain occupies 2472–2549; the sequence is EALDAVGQAV…ELIHLVAGKS (78 aa). Ser-2509 carries the post-translational modification O-(pantetheine 4'-phosphoryl)serine.

Its pathway is secondary metabolite biosynthesis. In terms of biological role, highly reducing polyketide synthase; part of the gene cluster that mediates the biosynthesis of the lipopeptides W493 A and B. W493 A and B consist of six amino acid residues D-allo-thr, L-Ala, D-Ala, L-Gln, D-Tyr, and L-Val/L-Ile linked to a 3-hydroxy-4-methyltetradecanoic acid polyketide chain. The biosynthesis starts with formation of the linear polyketide chain by the highly reducing polyketide synthase PKS40. The gene cluster contains a putative acyl-CoA ligase (FPSE_09184) for formation of a CoA thioester polyketide. The thiol bond could be hydrolyzed by the putative thioesterase (FPSE_09186) and then accepted by the first T domain in module 1 of NRPS32. The second T domain is responsible for accepting a threonine, which is adenylated by the A domain and epimerized to the D-allo-threonine formed by the E domain. The five successive modules incorporate Ala, Ala, Gln, Tyr, and Val/Ile into the final product, which is released by cyclization. The protein is Highly reducing polyketide synthase 40 of Fusarium pseudograminearum (strain CS3096) (Wheat and barley crown-rot fungus).